Here is a 243-residue protein sequence, read N- to C-terminus: UPF0502 protein H16_B1091 (243 aa).

Residues 1 to 23 (MQSNHDSDASQAGDRPARPALRP) are disordered.

It belongs to the UPF0502 family.

This chain is UPF0502 protein H16_B1091, found in Cupriavidus necator (strain ATCC 17699 / DSM 428 / KCTC 22496 / NCIMB 10442 / H16 / Stanier 337) (Ralstonia eutropha).